A 706-amino-acid polypeptide reads, in one-letter code: Fatty acid oxidation complex subunit alpha (706 aa).

The enoyl-CoA hydratase stretch occupies residues 1-188 (MEKTFNLTRR…KMGLVNDVVP (188 aa)). The interval 308-706 (RKVKKAVILG…TMARENVSFF (399 aa)) is 3-hydroxyacyl-CoA dehydrogenase.

This sequence in the N-terminal section; belongs to the enoyl-CoA hydratase/isomerase family. The protein in the central section; belongs to the 3-hydroxyacyl-CoA dehydrogenase family. As to quaternary structure, heterotetramer of two alpha chains (FadJ) and two beta chains (FadI).

It localises to the cytoplasm. It carries out the reaction a (3S)-3-hydroxyacyl-CoA = a (2E)-enoyl-CoA + H2O. The enzyme catalyses a 4-saturated-(3S)-3-hydroxyacyl-CoA = a (3E)-enoyl-CoA + H2O. It catalyses the reaction a (3S)-3-hydroxyacyl-CoA + NAD(+) = a 3-oxoacyl-CoA + NADH + H(+). The catalysed reaction is (3S)-3-hydroxybutanoyl-CoA = (3R)-3-hydroxybutanoyl-CoA. It participates in lipid metabolism; fatty acid beta-oxidation. Functionally, catalyzes the formation of a hydroxyacyl-CoA by addition of water on enoyl-CoA. Also exhibits 3-hydroxyacyl-CoA epimerase and 3-hydroxyacyl-CoA dehydrogenase activities. This Shewanella sp. (strain W3-18-1) protein is Fatty acid oxidation complex subunit alpha.